A 517-amino-acid polypeptide reads, in one-letter code: Probable bifunctional methylthioribulose-1-phosphate dehydratase/enolase-phosphatase E1 (517 aa).

The methylthioribulose-1-phosphate dehydratase stretch occupies residues 1 to 242; the sequence is MACGGCSCEA…CIKLYQLGID (242 aa). Residue C114 participates in substrate binding. Zn(2+) contacts are provided by H132 and H134. The active-site Proton donor/acceptor; for methylthioribulose-1-phosphate dehydratase activity is the E157. H207 provides a ligand contact to Zn(2+). Residues 278–517 are enolase-phosphatase E1; that stretch reads VVLDIEGTTT…FRTIKSFSEI (240 aa). Residues D281 and E283 each coordinate Mg(2+). Residues 416–417 and K450 each bind substrate; that span reads SS. Mg(2+) is bound at residue D476.

This sequence in the N-terminal section; belongs to the aldolase class II family. MtnB subfamily. In the C-terminal section; belongs to the HAD-like hydrolase superfamily. MasA/MtnC family. The cofactor is Zn(2+). Mg(2+) serves as cofactor.

It carries out the reaction 5-(methylsulfanyl)-D-ribulose 1-phosphate = 5-methylsulfanyl-2,3-dioxopentyl phosphate + H2O. The enzyme catalyses 5-methylsulfanyl-2,3-dioxopentyl phosphate + H2O = 1,2-dihydroxy-5-(methylsulfanyl)pent-1-en-3-one + phosphate. It functions in the pathway amino-acid biosynthesis; L-methionine biosynthesis via salvage pathway; L-methionine from S-methyl-5-thio-alpha-D-ribose 1-phosphate: step 2/6. Its pathway is amino-acid biosynthesis; L-methionine biosynthesis via salvage pathway; L-methionine from S-methyl-5-thio-alpha-D-ribose 1-phosphate: step 3/6. It participates in amino-acid biosynthesis; L-methionine biosynthesis via salvage pathway; L-methionine from S-methyl-5-thio-alpha-D-ribose 1-phosphate: step 4/6. This is Probable bifunctional methylthioribulose-1-phosphate dehydratase/enolase-phosphatase E1 from Sorghum bicolor (Sorghum).